Consider the following 955-residue polypeptide: MDQKEVIGETGHKSVDLIKIMDKWQKKWTEAKIFEAEHDSRDKFFITAAFPYLNGVLHAGHLRTFTIPETIARYQRMKNKNVLWTFGFHVTGTPILGLANQIKERKEDIIWAYNNLHNIPMDELLKLNTPEAIVECFSKKATEAFKRMGFSLDWRRNFKTDDKVFSKFIEWQFYKLKEMGHITKGSHPVRYCPKCENPVEDHDLLHGEESTTVEYSLIKFTSKFDGKEIIMPMATLRPETVFGVTNAWVNPNEIYVMAEVHDEIQKLDSEDVDLKYNGIWIIGKECADKLKEQDRKIEILKEIKGSELLGLKIKNPVTKKEVPLLPADFVEMGIGTGCVMSVPAHAPYDYVALRDLGKVEEVGLIPLIEIEGYDKYPAKEIVEKLGIKDQNDEELLEQATSKIYKDEFHKGKLNENCGEYTGISVKDIKEKLTKDYINSNIAEIMYEFSEQKVVCRCGEKCIIKTVKGQWFINYSDENWKKLAHECIDNMNFAPEGIRQEFHNKVDWMKDKACARKRGLGTILPFDENWIIESLSDSTIYMAYYTIARFINEGLTPEQLIPELFDYVYLGNGNAEEIAKNSKIQAETIEEMRKEFLYYYPLDWRCSAKDLIPNHLTFMIFNHVALFGREHWPRGIEINGYVTIEGKKLSKSKGPVLPVSEVAENFGADVARFYITTCAELPQDADVKFKEMEKARDNLIKLYDLAVSVMEEESAEKELSLIDKWLLHKTYSSINSAETAYEEFQLRKIGLMFYELINDLRWYKRRGGENNSVLKEVVEIWTKLLSPVTPHLCEEIWEKLGYAGFISQEMYPVSKPELINEDLELGEEFIKSAMEDIRNIKGVAKINPEKMYLYTADDWKYDLLEFMNENAEKNVKALIPMVMKEDKFKRHGKEVMKLINEIMKIGVKKAIAEVEILENAKTFIESEFDCKVIVNGEDVKGKKKFAIPYKPAIYME.

The short motif at 51–61 (PYLNGVLHAGH) is the 'HIGH' region element. Residues 647–651 (KLSKS) carry the 'KMSKS' region motif. Residue K650 coordinates ATP.

This sequence belongs to the class-I aminoacyl-tRNA synthetase family.

It is found in the cytoplasm. The catalysed reaction is tRNA(Leu) + L-leucine + ATP = L-leucyl-tRNA(Leu) + AMP + diphosphate. This Methanococcus maripaludis (strain DSM 14266 / JCM 13030 / NBRC 101832 / S2 / LL) protein is Leucine--tRNA ligase.